A 61-amino-acid polypeptide reads, in one-letter code: Translational regulator CsrA (61 aa).

It belongs to the CsrA/RsmA family. As to quaternary structure, homodimer; the beta-strands of each monomer intercalate to form a hydrophobic core, while the alpha-helices form wings that extend away from the core.

It is found in the cytoplasm. Its function is as follows. A key translational regulator that binds mRNA to regulate translation initiation and/or mRNA stability. Mediates global changes in gene expression, shifting from rapid growth to stress survival by linking envelope stress, the stringent response and the catabolite repression systems. Usually binds in the 5'-UTR; binding at or near the Shine-Dalgarno sequence prevents ribosome-binding, repressing translation, binding elsewhere in the 5'-UTR can activate translation and/or stabilize the mRNA. Its function is antagonized by small RNA(s). This is Translational regulator CsrA from Mannheimia succiniciproducens (strain KCTC 0769BP / MBEL55E).